Reading from the N-terminus, the 349-residue chain is Twinfilin-2 (349 aa).

ADF-H domains are found at residues 4-139 (QTGI…KHVS) and 177-313 (GLAF…DEVH). The disordered stretch occupies residues 324-349 (AKPKGPVGKRGQKRLIKGPGENGEDS).

It belongs to the actin-binding proteins ADF family. Twinfilin subfamily. In terms of assembly, interacts with G-actin; ADP-actin form and capping protein (CP).

It is found in the cytoplasm. Its subcellular location is the cytoskeleton. It localises to the perinuclear region. In terms of biological role, actin-binding protein involved in motile and morphological processes. Inhibits actin polymerization, likely by sequestering G-actin. In Gallus gallus (Chicken), this protein is Twinfilin-2 (TWF2).